The following is a 379-amino-acid chain: Alcohol dehydrogenase 2 (379 aa).

8 residues coordinate Zn(2+): C47, T49, H69, C99, C102, C105, C113, and C177. Residues T49 and H69 each coordinate an alcohol. Residue T49 coordinates NAD(+). NAD(+) is bound by residues 202–207 (GLGAVG), D226, K231, T272, V295, 295–297 (VGV), F322, and R372.

This sequence belongs to the zinc-containing alcohol dehydrogenase family. Homodimer. Zn(2+) is required as a cofactor.

It is found in the cytoplasm. It catalyses the reaction a primary alcohol + NAD(+) = an aldehyde + NADH + H(+). The catalysed reaction is a secondary alcohol + NAD(+) = a ketone + NADH + H(+). This is Alcohol dehydrogenase 2 (ADH2) from Oryza sativa subsp. indica (Rice).